A 177-amino-acid polypeptide reads, in one-letter code: Transmembrane protein 190 (177 aa).

Residues 1-21 (MLGCGIPALGLLLLLQGSADG) form the signal peptide. Topologically, residues 22 to 81 (NGIQGFFYPWSCEGDIWDRESCGGQAAIDSPNLCLRLRCCYRNGVCYHQRPDENVRRKHM) are extracellular. One can recognise a P-type domain in the interval 31-71 (WSCEGDIWDRESCGGQAAIDSPNLCLRLRCCYRNGVCYHQR). Intrachain disulfides connect Cys33/Cys61, Cys43/Cys60, and Cys55/Cys67. The chain crosses the membrane as a helical span at residues 82–102 (WALVWTCSGLLLLSCSICLFW). Residues 103-177 (WAKRRDVLHM…EETEGEEEED (75 aa)) are Cytoplasmic-facing. The interval 131–177 (KHRGTKKTPSTGSVPVALSKESRDVEGGTEGEGTEEGEETEGEEEED) is disordered. The segment covering 157–177 (GGTEGEGTEEGEETEGEEEED) has biased composition (acidic residues).

It localises to the membrane. The protein is Transmembrane protein 190 (TMEM190) of Homo sapiens (Human).